A 973-amino-acid polypeptide reads, in one-letter code: Isoleucine--tRNA ligase, mitochondrial (973 aa).

Positions 87-97 (PFANGRLHIGH) match the 'HIGH' region motif. A 'KMSKS' region motif is present at residues 625-629 (KQSKS). Lys628 serves as a coordination point for ATP.

It belongs to the class-I aminoacyl-tRNA synthetase family.

Its subcellular location is the cytoplasm. It localises to the mitochondrion matrix. The enzyme catalyses tRNA(Ile) + L-isoleucine + ATP = L-isoleucyl-tRNA(Ile) + AMP + diphosphate. This Schizosaccharomyces pombe (strain 972 / ATCC 24843) (Fission yeast) protein is Isoleucine--tRNA ligase, mitochondrial (ism1).